The following is a 204-amino-acid chain: ATP phosphoribosyltransferase (204 aa).

Belongs to the ATP phosphoribosyltransferase family. Short subfamily. Heteromultimer composed of HisG and HisZ subunits.

The protein resides in the cytoplasm. The catalysed reaction is 1-(5-phospho-beta-D-ribosyl)-ATP + diphosphate = 5-phospho-alpha-D-ribose 1-diphosphate + ATP. It functions in the pathway amino-acid biosynthesis; L-histidine biosynthesis; L-histidine from 5-phospho-alpha-D-ribose 1-diphosphate: step 1/9. Functionally, catalyzes the condensation of ATP and 5-phosphoribose 1-diphosphate to form N'-(5'-phosphoribosyl)-ATP (PR-ATP). Has a crucial role in the pathway because the rate of histidine biosynthesis seems to be controlled primarily by regulation of HisG enzymatic activity. The polypeptide is ATP phosphoribosyltransferase (Staphylococcus epidermidis (strain ATCC 35984 / DSM 28319 / BCRC 17069 / CCUG 31568 / BM 3577 / RP62A)).